A 175-amino-acid chain; its full sequence is Large ribosomal subunit protein uL10 (175 aa).

The protein belongs to the universal ribosomal protein uL10 family. In terms of assembly, part of the ribosomal stalk of the 50S ribosomal subunit. The N-terminus interacts with L11 and the large rRNA to form the base of the stalk. The C-terminus forms an elongated spine to which L12 dimers bind in a sequential fashion forming a multimeric L10(L12)X complex.

Forms part of the ribosomal stalk, playing a central role in the interaction of the ribosome with GTP-bound translation factors. This is Large ribosomal subunit protein uL10 from Mycobacterium sp. (strain KMS).